Consider the following 90-residue polypeptide: MTRTVMCRKYKEQLPGLERPPYPGAKGQDIFEHISQQAWADWQKHQTMLINEKRLNMMNAEDRKYLQGEMDKFFAGEDYAQAEGYVPPAE.

The protein belongs to the Fe(2+)-trafficking protein family.

In terms of biological role, could be a mediator in iron transactions between iron acquisition and iron-requiring processes, such as synthesis and/or repair of Fe-S clusters in biosynthetic enzymes. In Pseudomonas putida (strain W619), this protein is Probable Fe(2+)-trafficking protein.